The sequence spans 521 residues: NAD(P)H-quinone oxidoreductase subunit 2 (521 aa).

The next 14 helical transmembrane spans lie at 14–34 (VILPEGIVIVTLLTVLVTDLI), 42–62 (LTPALAITGLSAAIAVLTLQW), 79–99 (LSIVFRGIVLLSAAVTILLSI), 109–129 (LGEFITILLTASLGGMFLSGA), 132–152 (LVTIFVSLETLSISSYLLTGY), 167–187 (LLIGAASSAIFLYGVSLLYGL), 207–227 (LALLISLIFVIAGIAFKISAV), 241–261 (PTPIVAFLSVGSKAAGFALAI), 275–295 (WHFVFTALAILSLVLGNVVAL), 303–323 (LLAYSSIAQAGFVMIGLIAGT), 331–351 (VYYLLIYLFMNLGGFACVILF), 375–395 (LGLSLCLLSLGGIPPLAGFFG), 397–417 (LYLFWAGWQAGLYGLVLLALI), and 463–483 (AGLVVCVIATAVAGILSNPLF).

It belongs to the complex I subunit 2 family. NDH-1 can be composed of about 15 different subunits; different subcomplexes with different compositions have been identified which probably have different functions.

The protein localises to the cellular thylakoid membrane. The enzyme catalyses a plastoquinone + NADH + (n+1) H(+)(in) = a plastoquinol + NAD(+) + n H(+)(out). The catalysed reaction is a plastoquinone + NADPH + (n+1) H(+)(in) = a plastoquinol + NADP(+) + n H(+)(out). Its function is as follows. NDH-1 shuttles electrons from an unknown electron donor, via FMN and iron-sulfur (Fe-S) centers, to quinones in the respiratory and/or the photosynthetic chain. The immediate electron acceptor for the enzyme in this species is believed to be plastoquinone. Couples the redox reaction to proton translocation, and thus conserves the redox energy in a proton gradient. Cyanobacterial NDH-1 also plays a role in inorganic carbon-concentration. The chain is NAD(P)H-quinone oxidoreductase subunit 2 from Synechococcus elongatus (strain ATCC 33912 / PCC 7942 / FACHB-805) (Anacystis nidulans R2).